The sequence spans 299 residues: MIPFLHIFFSVLILVLFVLGNFANGFIALVNFIDWVKRKKISLADQILTALAVSRVGLLWALLLNWYLTELNPAFYSVELRITSYNAWVVTNHFSMWLAASLSIFYLLKIANFSNLSFLNLKRRVRSIILVILLGSLLFLVCHLLAVNMDENMWTEEYEGNMTGKMKLRNAAHLSYMTVTTLWSFIPFMLSLISFLMLIFSLCKHLKKMQLHGEGSRDPSTTVHIKALQTLISFLLLCAIFFLFLIISVWSPRRLQNEPVFMVCKAVGNIYLSFDSFVLIWRTKKLKHIFLLILCQIRC.

Position 1 (M1) is a topological domain, extracellular. Residues 2-22 traverse the membrane as a helical segment; that stretch reads IPFLHIFFSVLILVLFVLGNF. Topologically, residues 23 to 55 are cytoplasmic; that stretch reads ANGFIALVNFIDWVKRKKISLADQILTALAVSR. Residues 56–76 traverse the membrane as a helical segment; sequence VGLLWALLLNWYLTELNPAFY. At 77-87 the chain is on the extracellular side; it reads SVELRITSYNA. Residues 88 to 108 traverse the membrane as a helical segment; the sequence is WVVTNHFSMWLAASLSIFYLL. Residues 109–126 are Cytoplasmic-facing; sequence KIANFSNLSFLNLKRRVR. The chain crosses the membrane as a helical span at residues 127 to 147; it reads SIILVILLGSLLFLVCHLLAV. Residues 148–181 are Extracellular-facing; that stretch reads NMDENMWTEEYEGNMTGKMKLRNAAHLSYMTVTT. The N-linked (GlcNAc...) asparagine glycan is linked to N161. Residues 182-202 traverse the membrane as a helical segment; sequence LWSFIPFMLSLISFLMLIFSL. Residues 203–229 lie on the Cytoplasmic side of the membrane; the sequence is CKHLKKMQLHGEGSRDPSTTVHIKALQ. A helical transmembrane segment spans residues 230–250; it reads TLISFLLLCAIFFLFLIISVW. The Extracellular portion of the chain corresponds to 251 to 259; sequence SPRRLQNEP. The helical transmembrane segment at 260 to 280 threads the bilayer; the sequence is VFMVCKAVGNIYLSFDSFVLI. Over 281–299 the chain is Cytoplasmic; sequence WRTKKLKHIFLLILCQIRC.

Belongs to the G-protein coupled receptor T2R family.

The protein localises to the membrane. Functionally, receptor that may play a role in the perception of bitterness and is gustducin-linked. May play a role in sensing the chemical composition of the gastrointestinal content. The activity of this receptor may stimulate alpha gustducin, mediate PLC-beta-2 activation and lead to the gating of TRPM5. The polypeptide is Taste receptor type 2 member 50 (TAS2R50) (Macaca mulatta (Rhesus macaque)).